We begin with the raw amino-acid sequence, 153 residues long: uncharacterized protein (153 aa).

Residues 16 to 40 (DEQTPLLNNDGIQRTPPSAEADMSL) form a disordered region. Over residues 20 to 31 (PLLNNDGIQRTP) the composition is skewed to polar residues.

This is an uncharacterized protein from Schizosaccharomyces pombe (strain 972 / ATCC 24843) (Fission yeast).